The chain runs to 654 residues: Endoplasmic reticulum chaperone BiP (654 aa).

An N-terminal signal peptide occupies residues 1 to 18 (MKLSLVAAVLLLLCAARA). The interval 1–80 (MKLSLVAAVL…EGERLIGDAA (80 aa)) is required for interaction with ELAPOR1. Position 36 to 39 (36 to 39 (GTTY)) interacts with ATP. Serine 86 is subject to Phosphoserine. Lysine 96 lines the ATP pocket. N6-acetyllysine is present on lysine 125. Residues 125-280 (KPYIQVDIGG…KKKTGKDVRK (156 aa)) are nucleotide-binding (NBD). Tyrosine 160 is subject to 3'-nitrotyrosine. N6-acetyllysine is present on lysine 213. 227-229 (GGT) is an ATP binding site. Lysine 271 carries the N6-acetyllysine modification. 293–300 (EKAKRALS) contributes to the ATP binding site. Lysine 326 bears the N6-acetyllysine mark. Residue lysine 352 forms a Glycyl lysine isopeptide (Lys-Gly) (interchain with G-Cter in SUMO2) linkage. Position 353 is an N6-acetyllysine; alternate (lysine 353). Lysine 353 participates in a covalent cross-link: Glycyl lysine isopeptide (Lys-Gly) (interchain with G-Cter in SUMO1); alternate. 364 to 367 (GSTR) provides a ligand contact to ATP. The interdomain linker stretch occupies residues 409–419 (QDTGDLVLLDV). Residues 420 to 500 (CPLTLGIETV…PRGVPQIEVT (81 aa)) form a substrate-binding (SBD) region. Lysine 447 carries the post-translational modification N6-succinyllysine. Arginine 492 bears the Omega-N-methylarginine mark. The residue at position 518 (threonine 518) is an O-AMP-threonine; alternate. Residue threonine 518 is modified to Phosphothreonine; alternate. Lysine 585 bears the N6,N6,N6-trimethyllysine; by METTL21A; in vitro mark. Residue lysine 585 is modified to N6,N6-dimethyllysine; alternate. Residue lysine 585 is modified to N6-methyllysine; alternate. N6-methyllysine is present on lysine 591. The tract at residues 632-654 (SKLYGSAGPPPTGEEDTSERDEL) is disordered. Threonine 643 and threonine 648 each carry phosphothreonine. The segment covering 644 to 654 (GEEDTSERDEL) has biased composition (acidic residues). At serine 649 the chain carries Phosphoserine. The Prevents secretion from ER motif lies at 651 to 654 (RDEL).

Belongs to the heat shock protein 70 family. As to quaternary structure, monomer and homooligomer; homooligomerization via the interdomain linker inactivates the chaperone activity and acts as a storage of HSPA5/BiP molecules. Interacts with DNAJC1 (via J domain). Component of an EIF2 complex at least composed of CELF1/CUGBP1, CALR, CALR3, EIF2S1, EIF2S2, HSP90B1 and HSPA5. Part of a large chaperone multiprotein complex comprising DNAJB11, HSP90B1, HSPA5, HYOU, PDIA2, PDIA4, PDIA6, PPIB, SDF2L1, UGGT1 and very small amounts of ERP29, but not, or at very low levels, CALR nor CANX. Interacts with TMEM132A and TRIM21. May form a complex with ERLEC1, OS9, SEL1L and SYVN1. Interacts with DNAJC10. Interacts with DNAJB9/ERdj4; leading to recruit HSPA5/BiP to ERN1/IRE1. Interacts with ERN1/IRE1 (via luminal domain); the interaction takes place following interaction with DNAJB9/ERdj4 and leads to inactivate ERN1/IRE1, the interaction also competitively inhibits ERN1 interaction with MANF. Interacts directly with MANF (via SAP domain); the interaction inhibits ATP binding to HSPA5/BiP and subsequent nucleotide exchange. Interacts with EIF2AK3/PERK (via luminal domain); interaction leads to inactivate EIF2AK3/PERK. Interacts with MX1. Interacts with METTL23. Interacts with CEMIP; the interaction induces calcium leakage from the endoplasmic reticulum and cell migration. Interacts with PCSK4 form; the interaction takes place in the endoplasmic reticulum. Interacts with CIPC. Interacts with CCDC88B (via C-terminus); the interaction opposes ERN1-mediated JNK activation, protecting against apoptosis. Interacts with INPP5K; necessary for INPP5K localization at the endoplasmic reticulum. Interacts with MANF; the interaction is direct. Interacts with LOXL2; leading to activate the ERN1/IRE1-XBP1 pathway of the unfolded protein response. Interacts with CLU under stressed condition; interaction increases CLU protein stability; facilitates its retrotranslocation and redistribution to the mitochondria; cooperatively suppress stress-induced apoptosis by stabilizing mitochondrial membrane integrity. Interacts with CCDC47. Interacts with CLN3. Interacts with ELAPOR1; may regulate the function of HSPA5 in apoptosis and cell proliferation. Interacts with CASP7. Interacts with ILDR2; the interaction stabilizes ILDR2 expression. Interacts with ADAM7. Post-translationally, in unstressed cells, AMPylation at Thr-518 by FICD inactivates the chaperome activity: AMPylated form is locked in a relatively inert state and only weakly stimulated by J domain-containing proteins. In response to endoplasmic reticulum stress, de-AMPylation by the same protein, FICD, restores the chaperone activity.

The protein resides in the endoplasmic reticulum lumen. Its subcellular location is the melanosome. It localises to the cytoplasm. It is found in the cell surface. The catalysed reaction is ATP + H2O = ADP + phosphate + H(+). The chaperone activity is regulated by ATP-induced allosteric coupling of the nucleotide-binding (NBD) and substrate-binding (SBD) domains. In the ADP-bound and nucleotide-free (apo) states, the two domains have little interaction. In contrast, in the ATP-bound state the two domains are tightly coupled, which results in drastically accelerated kinetics in both binding and release of polypeptide substrates. J domain-containing co-chaperones (DNAJB9/ERdj4 or DNAJC10/ERdj5) stimulate the ATPase activity and are required for efficient substrate recognition by HSPA5/BiP. Homooligomerization inactivates participating HSPA5/BiP protomers and probably act as reservoirs to store HSPA5/BiP molecules when they are not needed by the cell. Endoplasmic reticulum chaperone that plays a key role in protein folding and quality control in the endoplasmic reticulum lumen. Involved in the correct folding of proteins and degradation of misfolded proteins via its interaction with DNAJC10/ERdj5, probably to facilitate the release of DNAJC10/ERdj5 from its substrate. Acts as a key repressor of the EIF2AK3/PERK and ERN1/IRE1-mediated unfolded protein response (UPR). In the unstressed endoplasmic reticulum, recruited by DNAJB9/ERdj4 to the luminal region of ERN1/IRE1, leading to disrupt the dimerization of ERN1/IRE1, thereby inactivating ERN1/IRE1. Also binds and inactivates EIF2AK3/PERK in unstressed cells. Accumulation of misfolded protein in the endoplasmic reticulum causes release of HSPA5/BiP from ERN1/IRE1 and EIF2AK3/PERK, allowing their homodimerization and subsequent activation. Plays an auxiliary role in post-translational transport of small presecretory proteins across endoplasmic reticulum (ER). May function as an allosteric modulator for SEC61 channel-forming translocon complex, likely cooperating with SEC62 to enable the productive insertion of these precursors into SEC61 channel. Appears to specifically regulate translocation of precursors having inhibitory residues in their mature region that weaken channel gating. May also play a role in apoptosis and cell proliferation. The chain is Endoplasmic reticulum chaperone BiP from Ictidomys tridecemlineatus (Thirteen-lined ground squirrel).